The primary structure comprises 218 residues: Protein GrpE (218 aa).

Residues 1–21 show a composition bias toward basic and acidic residues; that stretch reads MSDKQREAERQQSEDKAHSEA. Residues 1-66 are disordered; it reads MSDKQREAER…LEEARARAEE (66 aa). Over residues 24 to 36 the composition is skewed to low complexity; the sequence is AEAGQAPEAQAAE.

Belongs to the GrpE family. As to quaternary structure, homodimer.

It localises to the cytoplasm. Participates actively in the response to hyperosmotic and heat shock by preventing the aggregation of stress-denatured proteins, in association with DnaK and GrpE. It is the nucleotide exchange factor for DnaK and may function as a thermosensor. Unfolded proteins bind initially to DnaJ; upon interaction with the DnaJ-bound protein, DnaK hydrolyzes its bound ATP, resulting in the formation of a stable complex. GrpE releases ADP from DnaK; ATP binding to DnaK triggers the release of the substrate protein, thus completing the reaction cycle. Several rounds of ATP-dependent interactions between DnaJ, DnaK and GrpE are required for fully efficient folding. The polypeptide is Protein GrpE (Alkalilimnicola ehrlichii (strain ATCC BAA-1101 / DSM 17681 / MLHE-1)).